A 510-amino-acid chain; its full sequence is MNGTDLPRLQPKIRRVNLDTGRENVVVISRHSAALRPEIFRGFSRVELRRNAKIMLATLIITDDDSLVGPDDLGLSEPAFRRFAEPVGSAVTIAPAASPASLDAVRAKIMGQTFSAVDISAIIDDLTHYRYSDMEIAAFLISSASFMTNGELIALVDSMARAGTQLKWRNPIIVDKHCIGGIPGNRTSMIVVPIVAAHGLTIPKTSSRAITSPAGTADTMEMLARVDVGVEEMKDIVAACRGCLVWGGHVNLSPADDILISVERPLGLDTREQMVASILSKKLAAGSTHLLIDLPVGPTAKLVNEMEAMRLRKLFEFVGDHYGISVEVVVTDGRQPIGNGIGPVLEAQDVMAVLANDPEAPADLREKSLRLAAHLLEYDPKLRGGSGYARARELLDSGAALKQMQKIIDAQGPPTCCTDLGNLTFDVTASRDGFVSGINCLQLNRLARIAGAPIDKGAGIRLFKKIGDRVQQGEPLYRIHAFERSGRDLAAAGTTAYTIDSEESNLEATP.

The protein belongs to the thymidine/pyrimidine-nucleoside phosphorylase family. Type 2 subfamily.

The catalysed reaction is thymidine + phosphate = 2-deoxy-alpha-D-ribose 1-phosphate + thymine. The sequence is that of Putative thymidine phosphorylase from Nitrobacter hamburgensis (strain DSM 10229 / NCIMB 13809 / X14).